The primary structure comprises 159 residues: Succinate dehydrogenase [ubiquinone] cytochrome b small subunit, mitochondrial (159 aa).

Residues methionine 1–glutamine 56 constitute a mitochondrion transit peptide. The Mitochondrial matrix portion of the chain corresponds to serine 57–serine 63. Residues leucine 64–leucine 85 form a helical membrane-spanning segment. The Mitochondrial intermembrane segment spans residues asparagine 86–valine 90. A helical membrane pass occupies residues valine 91–valine 111. Histidine 102 serves as a coordination point for heme b. The Mitochondrial matrix segment spans residues threonine 112–leucine 120. Tyrosine 114 is a binding site for a ubiquinone. A helical transmembrane segment spans residues glutamine 121–phenylalanine 142. Topologically, residues asparagine 143–leucine 159 are mitochondrial intermembrane.

This sequence belongs to the CybS family. Component of complex II composed of four subunits: the flavoprotein (FP) SDHA, iron-sulfur protein (IP) SDHB, and a cytochrome b560 composed of SDHC and SDHD.

The protein localises to the mitochondrion inner membrane. Its pathway is carbohydrate metabolism; tricarboxylic acid cycle. Membrane-anchoring subunit of succinate dehydrogenase (SDH) that is involved in complex II of the mitochondrial electron transport chain and is responsible for transferring electrons from succinate to ubiquinone (coenzyme Q). SDH also oxidizes malate to the non-canonical enol form of oxaloacetate, enol-oxaloacetate. Enol-oxaloacetate, which is a potent inhibitor of the succinate dehydrogenase activity, is further isomerized into keto-oxaloacetate. This is Succinate dehydrogenase [ubiquinone] cytochrome b small subunit, mitochondrial (Sdhd) from Rattus norvegicus (Rat).